The chain runs to 207 residues: dTTP/UTP pyrophosphatase (207 aa).

Catalysis depends on aspartate 68, which acts as the Proton acceptor.

The protein belongs to the Maf family. YhdE subfamily. It depends on a divalent metal cation as a cofactor.

The protein localises to the cytoplasm. The enzyme catalyses dTTP + H2O = dTMP + diphosphate + H(+). It catalyses the reaction UTP + H2O = UMP + diphosphate + H(+). In terms of biological role, nucleoside triphosphate pyrophosphatase that hydrolyzes dTTP and UTP. May have a dual role in cell division arrest and in preventing the incorporation of modified nucleotides into cellular nucleic acids. This Staphylothermus marinus (strain ATCC 43588 / DSM 3639 / JCM 9404 / F1) protein is dTTP/UTP pyrophosphatase.